Reading from the N-terminus, the 91-residue chain is Large ribosomal subunit protein uL22 (91 aa).

It belongs to the universal ribosomal protein uL22 family. Part of the 50S ribosomal subunit.

Functionally, this protein binds specifically to 23S rRNA; its binding is stimulated by other ribosomal proteins, e.g. L4, L17, and L20. It is important during the early stages of 50S assembly. It makes multiple contacts with different domains of the 23S rRNA in the assembled 50S subunit and ribosome. Its function is as follows. The globular domain of the protein is located near the polypeptide exit tunnel on the outside of the subunit, while an extended beta-hairpin is found that lines the wall of the exit tunnel in the center of the 70S ribosome. This Pigeon pea witches'-broom phytoplasma protein is Large ribosomal subunit protein uL22 (rplV).